We begin with the raw amino-acid sequence, 157 residues long: Ribosomal RNA large subunit methyltransferase H (157 aa).

Residues L74, G106, and 125-130 (LSDMTL) each bind S-adenosyl-L-methionine.

The protein belongs to the RNA methyltransferase RlmH family. Homodimer.

The protein localises to the cytoplasm. It catalyses the reaction pseudouridine(1915) in 23S rRNA + S-adenosyl-L-methionine = N(3)-methylpseudouridine(1915) in 23S rRNA + S-adenosyl-L-homocysteine + H(+). Functionally, specifically methylates the pseudouridine at position 1915 (m3Psi1915) in 23S rRNA. The chain is Ribosomal RNA large subunit methyltransferase H from Desulfovibrio desulfuricans (strain ATCC 27774 / DSM 6949 / MB).